Consider the following 797-residue polypeptide: Complex I intermediate-associated protein 84, mitochondrial (797 aa).

The transit peptide at 1–69 (MRSHLARNAT…ALCTRTSKRT (69 aa)) directs the protein to the mitochondrion.

The protein resides in the mitochondrion. In terms of biological role, chaperone protein involved in the assembly of the mitochondrial NADH:ubiquinone oxidoreductase complex (complex I). This Neurospora crassa (strain ATCC 24698 / 74-OR23-1A / CBS 708.71 / DSM 1257 / FGSC 987) protein is Complex I intermediate-associated protein 84, mitochondrial (cia84).